A 213-amino-acid chain; its full sequence is RNA pyrophosphohydrolase (213 aa).

The 144-residue stretch at Gly6–Thr149 folds into the Nudix hydrolase domain. Residues Gly38–Gly59 carry the Nudix box motif. The disordered stretch occupies residues Asn185–Thr213.

Belongs to the Nudix hydrolase family. RppH subfamily. A divalent metal cation is required as a cofactor.

Accelerates the degradation of transcripts by removing pyrophosphate from the 5'-end of triphosphorylated RNA, leading to a more labile monophosphorylated state that can stimulate subsequent ribonuclease cleavage. The sequence is that of RNA pyrophosphohydrolase from Albidiferax ferrireducens (strain ATCC BAA-621 / DSM 15236 / T118) (Rhodoferax ferrireducens).